The chain runs to 454 residues: GTPase Der (454 aa).

2 consecutive EngA-type G domains span residues 3–167 (PVIT…GIAE) and 181–354 (MKIA…AAAM). GTP is bound by residues 9–16 (GRPNVGKS), 56–60 (DTGGF), 119–122 (NKTE), 187–194 (GRPNVGKS), 234–238 (DTAGL), and 299–302 (NKWD). Residues 355–439 (AKLPTPRLTR…PLRIQMNTAK (85 aa)) form the KH-like domain.

The protein belongs to the TRAFAC class TrmE-Era-EngA-EngB-Septin-like GTPase superfamily. EngA (Der) GTPase family. In terms of assembly, associates with the 50S ribosomal subunit.

In terms of biological role, GTPase that plays an essential role in the late steps of ribosome biogenesis. The polypeptide is GTPase Der (Polynucleobacter asymbioticus (strain DSM 18221 / CIP 109841 / QLW-P1DMWA-1) (Polynucleobacter necessarius subsp. asymbioticus)).